The primary structure comprises 341 residues: tRNA N6-adenosine threonylcarbamoyltransferase (341 aa).

Residues His111 and His115 each coordinate Fe cation. Residues 134-138 (LVSGG), Asp167, Gly180, and Asn276 each bind substrate. Asp304 lines the Fe cation pocket.

It belongs to the KAE1 / TsaD family. Fe(2+) is required as a cofactor.

It localises to the cytoplasm. The enzyme catalyses L-threonylcarbamoyladenylate + adenosine(37) in tRNA = N(6)-L-threonylcarbamoyladenosine(37) in tRNA + AMP + H(+). In terms of biological role, required for the formation of a threonylcarbamoyl group on adenosine at position 37 (t(6)A37) in tRNAs that read codons beginning with adenine. Is involved in the transfer of the threonylcarbamoyl moiety of threonylcarbamoyl-AMP (TC-AMP) to the N6 group of A37, together with TsaE and TsaB. TsaD likely plays a direct catalytic role in this reaction. The polypeptide is tRNA N6-adenosine threonylcarbamoyltransferase (Pseudomonas aeruginosa (strain UCBPP-PA14)).